Reading from the N-terminus, the 97-residue chain is U6-theraphotoxin-Hhn1a 4 (97 aa).

Positions 1 to 33 (MLIKQFSRRSKNMKVQILLAFAALFVLAVGSYA) are cleaved as a signal peptide. The propeptide occupies 34-61 (SESKKLDLRDALLSAMFSADYQLNPQER). 3 cysteine pairs are disulfide-bonded: Cys63–Cys77, Cys70–Cys82, and Cys76–Cys89.

Belongs to the neurotoxin 10 (Hwtx-1) family. 12 (Hntx-12) subfamily. As to expression, expressed by the venom gland.

It localises to the secreted. Functionally, ion channel inhibitor. This is U6-theraphotoxin-Hhn1a 4 from Cyriopagopus hainanus (Chinese bird spider).